The primary structure comprises 85 residues: Antifungal protein (85 aa).

A signal peptide spans 1–18 (MVKLFVIVILALIAVAFG). Tandem repeats lie at residues 19–25 (QHGHGGQ) and 67–73 (QHGHGGQ). The tract at residues 19–73 (QHGHGGQDQHGYGHGQQAVYGKGHEGHGVNNLGQDGHGQHGYAHGHSDQHGHGGQ) is 2 X 7 AA repeats of Q-H-G-H-G-G-Q. Residues 22–32 (HGGQDQHGYGH) are compositionally biased toward gly residues. A disordered region spans residues 22–85 (HGGQDQHGYG…QHDGYKNRGY (64 aa)). The segment covering 63 to 85 (GHSDQHGHGGQHGQHDGYKNRGY) has biased composition (basic and acidic residues).

Homodimer. Post-translationally, the N-terminus is blocked. As to expression, hemolymph.

This protein inhibits the growth of a variety of fungal species. The antifungal activity of this protein is enhanced by the presence of sarcotoxin IA. In Sarcophaga peregrina (Flesh fly), this protein is Antifungal protein.